The primary structure comprises 247 residues: UPF0246 protein CD630_18230 (247 aa).

It belongs to the UPF0246 family.

The chain is UPF0246 protein CD630_18230 from Clostridioides difficile (strain 630) (Peptoclostridium difficile).